Reading from the N-terminus, the 115-residue chain is U3-lycotoxin-Ls1n (115 aa).

The N-terminal stretch at 1–20 (MKFVLLFGVLLVTLFSYSSA) is a signal peptide. The propeptide occupies 21–44 (EMLDDFDQADEDELLSLIEKEEAR). 4 cysteine pairs are disulfide-bonded: Cys48–Cys63, Cys55–Cys72, Cys62–Cys87, and Cys74–Cys85.

The protein belongs to the neurotoxin 19 (CSTX) family. 01 subfamily. In terms of tissue distribution, expressed by the venom gland.

The protein resides in the secreted. In Lycosa singoriensis (Wolf spider), this protein is U3-lycotoxin-Ls1n.